Here is a 327-residue protein sequence, read N- to C-terminus: tRNA uridine(34) hydroxylase (327 aa).

Residues 123 to 217 (SDPEVLVVDT…YLEEVPQEQS (95 aa)) enclose the Rhodanese domain. C177 serves as the catalytic Cysteine persulfide intermediate.

It belongs to the TrhO family.

It catalyses the reaction uridine(34) in tRNA + AH2 + O2 = 5-hydroxyuridine(34) in tRNA + A + H2O. In terms of biological role, catalyzes oxygen-dependent 5-hydroxyuridine (ho5U) modification at position 34 in tRNAs. The chain is tRNA uridine(34) hydroxylase from Vibrio cholerae serotype O1 (strain ATCC 39315 / El Tor Inaba N16961).